The sequence spans 156 residues: MTEIQRLLTETIESLNTREKRDNKPRFSISFIRKHPGLFIGMYVAFFATLAVMLQSETLSGSVWLLVVLFILLNGFFFFDVYPRYRYEDIDVLDFRVCYNGEWYNTRFVPAALVEAILNSPRVADVHKEQLQKMIVRKGELSFYDIFTLARAESTS.

Residues 1-35 are Cytoplasmic-facing; it reads MTEIQRLLTETIESLNTREKRDNKPRFSISFIRKH. Residues 36 to 56 traverse the membrane as a helical segment; it reads PGLFIGMYVAFFATLAVMLQS. Topologically, residues 57 to 58 are periplasmic; it reads ET. A helical transmembrane segment spans residues 59-79; it reads LSGSVWLLVVLFILLNGFFFF. Residues 80–156 lie on the Cytoplasmic side of the membrane; sequence DVYPRYRYED…FTLARAESTS (77 aa).

Its subcellular location is the cell inner membrane. The polypeptide is Inner membrane protein YlaC (ylaC) (Escherichia coli (strain K12)).